Here is a 309-residue protein sequence, read N- to C-terminus: Taste receptor type 2 member 114 (309 aa).

Over 1–7 the chain is Extracellular; sequence MLGAMEG. The chain crosses the membrane as a helical span at residues 8–28; it reads VLLSVATSEALLGIVGNTFIA. Residues 29–43 are Cytoplasmic-facing; the sequence is LVNCMDCTRNKNLYN. Residues 44 to 64 form a helical membrane-spanning segment; the sequence is IGFILTGLAISRICLVWILIT. Topologically, residues 65 to 87 are extracellular; sequence EAYIKIFSPQLLSPINIIELISY. A helical membrane pass occupies residues 88-108; sequence LWIITSQLNVWFATSLSIFYF. Topologically, residues 109-127 are cytoplasmic; it reads LKIANFSHHIFLWLKRRIN. Residues 128-148 traverse the membrane as a helical segment; the sequence is IVFAFLIGCLLMSWLFSFPVV. Residues 149-182 are Extracellular-facing; that stretch reads VKMVKDKKMLYINSSWQIHMKKSELIINYVFTNG. N-linked (GlcNAc...) asparagine glycosylation is present at Asn-161. Residues 183-203 traverse the membrane as a helical segment; the sequence is GVFLLFIIMLIVCFLLIISLW. At 204–233 the chain is on the cytoplasmic side; that stretch reads RHSKWMQSNESGFRDLNTEVHVKTIKVLLS. A helical transmembrane segment spans residues 234–254; the sequence is FIILFILHLIGITINVICLLV. The Extracellular portion of the chain corresponds to 255–259; the sequence is PENNL. The helical transmembrane segment at 260–280 threads the bilayer; sequence LFVFGLTIAFLYPCCHSLILI. At 281 to 309 the chain is on the cytoplasmic side; sequence LANSRLKRCFVRILQQLMCSEEGKEFRNT.

It belongs to the G-protein coupled receptor T2R family.

The protein localises to the membrane. In terms of biological role, putative taste receptor which may play a role in the perception of bitterness. This chain is Taste receptor type 2 member 114, found in Rattus norvegicus (Rat).